A 915-amino-acid polypeptide reads, in one-letter code: Protein inturned (915 aa).

The tract at residues 88 to 144 is disordered; that stretch reads NAKRQANSSNKSEAKLKKLTKILRRKRRPSQRKAEGKDSSQRPASILKNQAGQRPGV. Basic residues predominate over residues 104-118; it reads KKLTKILRRKRRPSQ. Residues 128–139 are compositionally biased toward polar residues; it reads QRPASILKNQAG. A PDZ domain is found at 165 to 253; that stretch reads SVSSSSADRG…PMQVRLTLET (89 aa). Positions 688–738 are disordered; that stretch reads GIRGRRASPQRSQSDSGSEGHADGTPASVARRDSLGSGGSDGSLGSAGFLK.

This sequence belongs to the inturned family.

It localises to the cytoplasm. The protein localises to the cell surface. Its subcellular location is the cytoskeleton. It is found in the cilium basal body. In terms of biological role, plays a key role in ciliogenesis and embryonic development. Regulator of cilia formation by controlling the organization of the apical actin cytoskeleton and the positioning of the basal bodies at the apical cell surface, which in turn is essential for the normal orientation of elongating ciliary microtubules. Plays a key role in definition of cell polarity via its role in ciliogenesis but not via conversion extension. Has an indirect effect on hedgehog signaling. The sequence is that of Protein inturned (intu) from Danio rerio (Zebrafish).